Reading from the N-terminus, the 48-residue chain is Probable antitoxin PhoAT (48 aa).

It belongs to the PhoAT antitoxin family. In terms of assembly, interacts with toxin PhoH2.

Probable antitoxin component of a type II toxin-antitoxin (TA) system. The probable cognate antitoxin is PhoAT; the toxin gene can be expressed in the absence of the antitoxin gene in M.smegmatis strain mc(2)155. This chain is Probable antitoxin PhoAT, found in Mycolicibacterium smegmatis (strain ATCC 700084 / mc(2)155) (Mycobacterium smegmatis).